Here is a 154-residue protein sequence, read N- to C-terminus: Nitrogen regulatory protein (154 aa).

The region spanning 6–150 (QILTPGRSLV…EALYQIVVDV (145 aa)) is the PTS EIIA type-2 domain. His68 functions as the Tele-phosphohistidine intermediate in the catalytic mechanism.

It is found in the cytoplasm. In terms of biological role, seems to have a role in regulating nitrogen assimilation. The protein is Nitrogen regulatory protein (ptsN) of Pseudomonas aeruginosa (strain ATCC 15692 / DSM 22644 / CIP 104116 / JCM 14847 / LMG 12228 / 1C / PRS 101 / PAO1).